Consider the following 707-residue polypeptide: uncharacterized protein (707 aa).

2 disordered regions span residues 15–122 (ALAK…LESY) and 667–707 (ESVQ…DIDE). Basic and acidic residues-rich tracts occupy residues 18–32 (KKNDKIKKKDTDKGI) and 40–52 (EGKDETLKRDVEK). Ser-112 carries the phosphoserine modification. Residues 659–700 (EEQRKLIRESVQQDQEHKEQMRQKKKQALKSDDIELDDLSEE) adopt a coiled-coil conformation. Residues 692–707 (IELDDLSEEEAEDIDE) show a composition bias toward acidic residues.

Belongs to the NOC2 family.

It localises to the nucleus. The protein resides in the nucleolus. This is an uncharacterized protein from Schizosaccharomyces pombe (strain 972 / ATCC 24843) (Fission yeast).